The following is a 247-amino-acid chain: 23S rRNA (guanosine-2'-O-)-methyltransferase RlmB (247 aa).

G197, I217, and L226 together coordinate S-adenosyl-L-methionine.

This sequence belongs to the class IV-like SAM-binding methyltransferase superfamily. RNA methyltransferase TrmH family. RlmB subfamily.

The protein resides in the cytoplasm. It carries out the reaction guanosine(2251) in 23S rRNA + S-adenosyl-L-methionine = 2'-O-methylguanosine(2251) in 23S rRNA + S-adenosyl-L-homocysteine + H(+). Functionally, specifically methylates the ribose of guanosine 2251 in 23S rRNA. The polypeptide is 23S rRNA (guanosine-2'-O-)-methyltransferase RlmB (Vibrio vulnificus (strain CMCP6)).